We begin with the raw amino-acid sequence, 340 residues long: Putative transport protein AF_1800 (340 aa).

The next 7 helical transmembrane spans lie at 7–27 (LVLLLSILVVLALTFYFFTPL), 57–77 (SVIATAIVILPISVLMFYGLI), 140–160 (TLLILNFFISIVVCFYALADM), 193–213 (LWFGNFVVAILIGLVSLPFFL), 225–245 (GLMFLAALIPIFAEWMIILPV), 260–280 (FLLIGVVFLYVLPELILRPYF), and 290–310 (LVLMLAFIGGGLVGGISGFFI).

Belongs to the autoinducer-2 exporter (AI-2E) (TC 2.A.86) family.

It localises to the cell membrane. The sequence is that of Putative transport protein AF_1800 from Archaeoglobus fulgidus (strain ATCC 49558 / DSM 4304 / JCM 9628 / NBRC 100126 / VC-16).